The chain runs to 82 residues: Small ribosomal subunit protein bS16 (82 aa).

This sequence belongs to the bacterial ribosomal protein bS16 family.

In Yersinia enterocolitica serotype O:8 / biotype 1B (strain NCTC 13174 / 8081), this protein is Small ribosomal subunit protein bS16.